The sequence spans 315 residues: tRNA dimethylallyltransferase (315 aa).

9–16 (GPTASGKT) provides a ligand contact to ATP. 11-16 (TASGKT) contacts substrate. Interaction with substrate tRNA regions lie at residues 34–37 (DSLL) and 158–162 (QRIQR).

Belongs to the IPP transferase family. Monomer. It depends on Mg(2+) as a cofactor.

The enzyme catalyses adenosine(37) in tRNA + dimethylallyl diphosphate = N(6)-dimethylallyladenosine(37) in tRNA + diphosphate. Catalyzes the transfer of a dimethylallyl group onto the adenine at position 37 in tRNAs that read codons beginning with uridine, leading to the formation of N6-(dimethylallyl)adenosine (i(6)A). This Acidithiobacillus ferrooxidans (strain ATCC 53993 / BNL-5-31) (Leptospirillum ferrooxidans (ATCC 53993)) protein is tRNA dimethylallyltransferase.